The chain runs to 133 residues: Holo-[acyl-carrier-protein] synthase (133 aa).

Mg(2+) is bound by residues aspartate 8 and glutamate 57.

It belongs to the P-Pant transferase superfamily. AcpS family. Mg(2+) serves as cofactor.

It is found in the cytoplasm. It catalyses the reaction apo-[ACP] + CoA = holo-[ACP] + adenosine 3',5'-bisphosphate + H(+). In terms of biological role, transfers the 4'-phosphopantetheine moiety from coenzyme A to a Ser of acyl-carrier-protein. This chain is Holo-[acyl-carrier-protein] synthase, found in Caulobacter sp. (strain K31).